Here is a 461-residue protein sequence, read N- to C-terminus: Histone acetyltransferase KAT5 (461 aa).

The 58-residue stretch at 8–65 (IEGCRLPVLRRNQDNEDEWPLAEILSVKDISGRKLFYVHYIDFNKRLDEWVTHERLDL) folds into the Tudor-knot domain. N6-acetyllysine is present on K52. The segment at 70 to 168 (FPKKEAKTPT…RMTGSLVSDR (99 aa)) is disordered. Residues S86 and S90 each carry the phosphoserine modification. Positions 90–100 (SPEREVKRKVE) are enriched in basic and acidic residues. Residues K96, K98, K135, and K137 each carry the N6-acetyllysine; by autocatalysis modification. The residue at position 147 (S147) is a Phosphoserine. The 278-residue stretch at 175 to 452 (TRMKNIECIE…IDSKCLHFTP (278 aa)) folds into the MYST-type HAT domain. The segment at 208 to 233 (LYLCEFCLKYGRSLKCLQRHLTKCDL) adopts a C2HC MYST-type zinc-finger fold. An N6-acetyllysine; by autocatalysis modification is found at K275. An interaction with ATF2 region spans residues 316-461 (ACILTLPPYQ…PKDWSKRGKW (146 aa)). Residues 318–320 (ILT) and 325–331 (QRRGYGK) each bind acetyl-CoA. Catalysis depends on E351, which acts as the Proton donor/acceptor. 2 residues coordinate acetyl-CoA: S355 and S364. Residue K378 forms a Glycyl lysine isopeptide (Lys-Gly) (interchain with G-Cter in SUMO1); alternate linkage. K378 is covalently cross-linked (Glycyl lysine isopeptide (Lys-Gly) (interchain with G-Cter in SUMO2); alternate). K399 participates in a covalent cross-link: Glycyl lysine isopeptide (Lys-Gly) (interchain with G-Cter in SUMO1).

The protein belongs to the MYST (SAS/MOZ) family. As to quaternary structure, component of the NuA4 histone acetyltransferase complex which contains the catalytic subunit KAT5/TIP60 and the subunits EP400, TRRAP/PAF400, BRD8/SMAP, EPC1, DMAP1/DNMAP1, RUVBL1/TIP49, RUVBL2, ING3, actin, ACTL6A/BAF53A, MORF4L1/MRG15, MORF4L2/MRGX, MRGBP, YEATS4/GAS41, VPS72/YL1 and MEAF6. KAT5/TIP60, EPC1, and ING3 together constitute a minimal HAT complex termed Piccolo NuA4. The NuA4 complex interacts with MYC. Interacts with ATM. Interacts with JADE1. Interacts with PLA2G4A/CPLA2, EDNRA and HDAC7. Interacts with the cytoplasmic tail of APP and APBB1/FE65. Interacts with TRIM24 and TRIM68. Forms a complex with SENP6 and UBE2I in response to UV irradiation. Identified in a complex with HINT1. Interacts with ATF2 and CUL3. Interacts with NR1D2 (via N-terminus). Component of a SWR1-like complex. Interacts with FOXP3. Interacts with ZBTB49. Interacts with SRF. Interacts with ATF3; promoting autoacetylation and deubiquitination by USP7. Interacts with EP300/p300; interaction promotes KAT5 autoacetylation. Interacts with PRKDC; interaction is impaired following KAT5 sumoylation. Interacts with GPR50. In terms of processing, phosphorylated on Ser-86 and Ser-90; enhanced during G2/M phase. The phosphorylated form has a higher activity. Phosphorylation at Ser-90 by CDK1 or CDK9 is a prerequisite for phosphorylation at Ser-86 by GSK3. Phosphorylation at Ser-86 by GSK3 (GSK3A or GSK3B) activates acetyltransferase and acyltransferase activities. Phosphorylation at Ser-90 by CDK9 promotes KAT5 recruitment to chromatin. Phosphorylation by VRK1 following DNA damage promotes KAT5 association with chromatin and histone acetyltransferase activity. Autoacetylated. Autoacetylation is required for histone acetyltransferase activity. Autoacetylation at Lys-275 is facilitated by interaction with EP300/p300: it prevents ubiquitination and subsequent degradation by the proteasome and promotes acetylation of target proteins. Deacetylated by HDAC3 and SIRT1. Deacetylation by HDAC3 promotes its ubiquitination and cytoplasmic localization. Post-translationally, sumoylated by UBE2I at Lys-378 and Lys-399, leading to increase of its histone acetyltransferase activity in UV-induced DNA damage response, as well as its translocation to nuclear bodies. Sumoylation with SUMO2 by PIAS4 at Lys-378 promotes repair of DNA double-strand breaks (DSBs) via homologous recombination (HR). Sumoylation by PIAS4 impairs interaction with PRKDC, inhibiting non-homologous end joining (NHEJ)-mediated repair of DSBs, thereby facilitating HR. Desumoylated by SENP3. In terms of processing, ubiquitinated by MDM2, leading to its proteasome-dependent degradation. Ubiquitination is prevented by autoacetylation at Lys-275. Ubiquitinated following deacetylation by HDAC3, leading to cytoplasmic localization. Deubiquitinated by USP7 following interaction with ATF3, promoting its stabilization.

The protein localises to the nucleus. Its subcellular location is the chromosome. The protein resides in the cytoplasm. It is found in the centromere. It localises to the kinetochore. The protein localises to the cytoskeleton. Its subcellular location is the spindle pole. The protein resides in the nucleolus. It is found in the perinuclear region. It carries out the reaction L-lysyl-[histone] + acetyl-CoA = N(6)-acetyl-L-lysyl-[histone] + CoA + H(+). The enzyme catalyses L-lysyl-[protein] + acetyl-CoA = N(6)-acetyl-L-lysyl-[protein] + CoA + H(+). The catalysed reaction is (2E)-butenoyl-CoA + L-lysyl-[protein] = N(6)-(2E)-butenoyl-L-lysyl-[protein] + CoA + H(+). It catalyses the reaction 2-hydroxyisobutanoyl-CoA + L-lysyl-[protein] = N(6)-(2-hydroxyisobutanoyl)-L-lysyl-[protein] + CoA + H(+). It carries out the reaction (S)-lactoyl-CoA + L-lysyl-[protein] = N(6)-[(S)-lactoyl]-L-lysyl-[protein] + CoA + H(+). With respect to regulation, acyltransferase and acetyltransferase activities are activated by phosphorylation and autoacetylation. Autoacetylation activates the histone acetyltransferase activity. Its function is as follows. Catalytic subunit of the NuA4 histone acetyltransferase complex, a multiprotein complex involved in transcriptional activation of select genes principally by acetylation of nucleosomal histones H2A and H4. Histone acetylation alters nucleosome-DNA interactions and promotes interaction of the modified histones with other proteins which positively regulate transcription. The NuA4 histone acetyltransferase complex is required for the activation of transcriptional programs associated with proto-oncogene mediated growth induction, tumor suppressor mediated growth arrest and replicative senescence, apoptosis, and DNA repair. The NuA4 complex plays a direct role in repair of DNA double-strand breaks (DSBs) by promoting homologous recombination (HR): the complex inhibits TP53BP1 binding to chromatin via MBTD1, which recognizes and binds histone H4 trimethylated at 'Lys-20' (H4K20me), and KAT5 that catalyzes acetylation of 'Lys-15' of histone H2A (H2AK15ac), thereby blocking the ubiquitination mark required for TP53BP1 localization at DNA breaks. Also involved in DSB repair by mediating acetylation of 'Lys-5' of histone H2AX (H2AXK5ac), promoting NBN/NBS1 assembly at the sites of DNA damage. The NuA4 complex plays a key role in hematopoietic stem cell maintenance and is required to maintain acetylated H2A.Z/H2AZ1 at MYC target genes. The NuA4 complex is also required for spermatid development by promoting acetylation of histones: histone hyperacetylation is required for histone replacement during the transition from round to elongating spermatids. Component of a SWR1-like complex that specifically mediates the removal of histone H2A.Z/H2AZ1 from the nucleosome. Also acetylates non-histone proteins, such as BMAL1, ATM, AURKB, CHKA, CGAS, ERCC4/XPF, LPIN1, TP53/p53, NDC80/HEC1, NR1D2, RAN, SOX4, FOXP3, SQSTM1, ULK1 and RUBCNL/Pacer. Directly acetylates and activates ATM. Promotes nucleotide excision repair (NER) by mediating acetylation of ERCC4/XPF, thereby promoting formation of the ERCC4-ERCC1 complex. Relieves NR1D2-mediated inhibition of APOC3 expression by acetylating NR1D2. Acts as a regulator of regulatory T-cells (Treg) by catalyzing FOXP3 acetylation, thereby promoting FOXP3 transcriptional repressor activity. Involved in skeletal myoblast differentiation by mediating acetylation of SOX4. Catalyzes acetylation of APBB1/FE65, increasing its transcription activator activity. Promotes transcription elongation during the activation phase of the circadian cycle by catalyzing acetylation of BMAL1, promoting elongation of circadian transcripts. Together with GSK3 (GSK3A or GSK3B), acts as a regulator of autophagy: phosphorylated at Ser-86 by GSK3 under starvation conditions, leading to activate acetyltransferase activity and promote acetylation of key autophagy regulators, such as ULK1 and RUBCNL/Pacer. Acts as a regulator of the cGAS-STING innate antiviral response by catalyzing acetylation the N-terminus of CGAS, thereby promoting CGAS DNA-binding and activation. Also regulates lipid metabolism by mediating acetylation of CHKA or LPIN1. Promotes lipolysis of lipid droplets following glucose deprivation by mediating acetylation of isoform 1 of CHKA, thereby promoting monomerization of CHKA and its conversion into a tyrosine-protein kinase. Acts as a regulator of fatty-acid-induced triacylglycerol synthesis by catalyzing acetylation of LPIN1, thereby promoting the synthesis of diacylglycerol. In addition to protein acetyltransferase, can use different acyl-CoA substrates, such as (2E)-butenoyl-CoA (crotonyl-CoA), S-lactoyl-CoA (lactyl-CoA) and 2-hydroxyisobutanoyl-CoA (2-hydroxyisobutyryl-CoA), and is able to mediate protein crotonylation, lactylation and 2-hydroxyisobutyrylation, respectively. Acts as a key regulator of chromosome segregation and kinetochore-microtubule attachment during mitosis by mediating acetylation or crotonylation of target proteins. Catalyzes acetylation of AURKB at kinetochores, increasing AURKB activity and promoting accurate chromosome segregation in mitosis. Acetylates RAN during mitosis, promoting microtubule assembly at mitotic chromosomes. Acetylates NDC80/HEC1 during mitosis, promoting robust kinetochore-microtubule attachment. Catalyzes crotonylation of MAPRE1/EB1, thereby ensuring accurate spindle positioning in mitosis. Catalyzes lactylation of NBN/NBS1 in response to DNA damage, thereby promoting DNA double-strand breaks (DSBs) via homologous recombination (HR). The protein is Histone acetyltransferase KAT5 of Pongo abelii (Sumatran orangutan).